The primary structure comprises 239 residues: Serine protease SplF (239 aa).

An N-terminal signal peptide occupies residues 1-36; sequence MNKNIIIKSIAALTILTSITGVGTTMVEGIQQTAKA. Catalysis depends on charge relay system residues H75, D114, and S192.

This sequence belongs to the peptidase S1B family.

Its subcellular location is the secreted. The polypeptide is Serine protease SplF (splF) (Staphylococcus aureus (strain NCTC 8325 / PS 47)).